A 472-amino-acid polypeptide reads, in one-letter code: Membrane-bound lytic murein transglycosylase F (472 aa).

A signal peptide spans 1 to 24 (MRLLVIFLLALLLMACKEAPKPLA). A non-LT domain region spans residues 25–259 (DPRTTKEIIV…HLIDRYYGHA (235 aa)). The LT domain stretch occupies residues 260-472 (DRLKPVDVTT…NGFGNTLSQE (213 aa)). The active site involves glutamate 306.

The protein in the N-terminal section; belongs to the bacterial solute-binding protein 3 family. In the C-terminal section; belongs to the transglycosylase Slt family.

The protein resides in the cell outer membrane. It carries out the reaction Exolytic cleavage of the (1-&gt;4)-beta-glycosidic linkage between N-acetylmuramic acid (MurNAc) and N-acetylglucosamine (GlcNAc) residues in peptidoglycan, from either the reducing or the non-reducing ends of the peptidoglycan chains, with concomitant formation of a 1,6-anhydrobond in the MurNAc residue.. Its function is as follows. Murein-degrading enzyme that degrades murein glycan strands and insoluble, high-molecular weight murein sacculi, with the concomitant formation of a 1,6-anhydromuramoyl product. Lytic transglycosylases (LTs) play an integral role in the metabolism of the peptidoglycan (PG) sacculus. Their lytic action creates space within the PG sacculus to allow for its expansion as well as for the insertion of various structures such as secretion systems and flagella. In Methylobacillus flagellatus (strain ATCC 51484 / DSM 6875 / VKM B-1610 / KT), this protein is Membrane-bound lytic murein transglycosylase F.